The primary structure comprises 314 residues: 1D-myo-inositol 2-acetamido-2-deoxy-alpha-D-glucopyranoside deacetylase 2 (314 aa).

3 residues coordinate Zn(2+): H25, D28, and H161.

The protein belongs to the MshB deacetylase family. Zn(2+) serves as cofactor.

The catalysed reaction is 1D-myo-inositol 2-acetamido-2-deoxy-alpha-D-glucopyranoside + H2O = 1D-myo-inositol 2-amino-2-deoxy-alpha-D-glucopyranoside + acetate. In terms of biological role, catalyzes the deacetylation of 1D-myo-inositol 2-acetamido-2-deoxy-alpha-D-glucopyranoside (GlcNAc-Ins) in the mycothiol biosynthesis pathway. In Frankia casuarinae (strain DSM 45818 / CECT 9043 / HFP020203 / CcI3), this protein is 1D-myo-inositol 2-acetamido-2-deoxy-alpha-D-glucopyranoside deacetylase 2.